We begin with the raw amino-acid sequence, 223 residues long: Translation initiation factor 6 (223 aa).

It belongs to the eIF-6 family.

Binds to the 50S ribosomal subunit and prevents its association with the 30S ribosomal subunit to form the 70S initiation complex. The sequence is that of Translation initiation factor 6 from Sulfolobus acidocaldarius (strain ATCC 33909 / DSM 639 / JCM 8929 / NBRC 15157 / NCIMB 11770).